The following is a 55-amino-acid chain: Mitochondrial import receptor subunit TOM7 homolog (55 aa).

Over 1–20 the chain is Cytoplasmic; it reads MVKLSKEAKQRLQQLFKGSQ. The chain crosses the membrane as a helical span at residues 21-36; the sequence is FAIRWGFIPLVIYLGF. Topologically, residues 37–55 are mitochondrial intermembrane; it reads KRGADPGMPEPTVLSLLWG.

It belongs to the Tom7 family. As to quaternary structure, forms part of the preprotein translocase complex of the outer mitochondrial membrane (TOM complex) which consists of at least 7 different proteins (TOMM5, TOMM6, TOMM7, TOMM20, TOMM22, TOMM40 and TOMM70).

It is found in the mitochondrion outer membrane. Its function is as follows. Required for assembly and stability of the TOM complex. Positive regulator of PRKN translocation to damaged mitochondria. Acts probably by stabilizing PINK1 on the outer membrane of depolarized mitochondria. The chain is Mitochondrial import receptor subunit TOM7 homolog (TOMM7) from Homo sapiens (Human).